A 151-amino-acid polypeptide reads, in one-letter code: SsrA-binding protein (151 aa).

It belongs to the SmpB family.

The protein resides in the cytoplasm. Functionally, required for rescue of stalled ribosomes mediated by trans-translation. Binds to transfer-messenger RNA (tmRNA), required for stable association of tmRNA with ribosomes. tmRNA and SmpB together mimic tRNA shape, replacing the anticodon stem-loop with SmpB. tmRNA is encoded by the ssrA gene; the 2 termini fold to resemble tRNA(Ala) and it encodes a 'tag peptide', a short internal open reading frame. During trans-translation Ala-aminoacylated tmRNA acts like a tRNA, entering the A-site of stalled ribosomes, displacing the stalled mRNA. The ribosome then switches to translate the ORF on the tmRNA; the nascent peptide is terminated with the 'tag peptide' encoded by the tmRNA and targeted for degradation. The ribosome is freed to recommence translation, which seems to be the essential function of trans-translation. The chain is SsrA-binding protein from Lactobacillus acidophilus (strain ATCC 700396 / NCK56 / N2 / NCFM).